We begin with the raw amino-acid sequence, 277 residues long: Undecaprenyl-diphosphatase (277 aa).

6 helical membrane passes run 47-67 (FNII…RGKI), 85-105 (ANLL…ADLI), 108-128 (WLFN…VMLW), 183-203 (AATE…AVYS), 218-238 (VFAV…RALL), and 249-269 (FAWY…FHLI).

This sequence belongs to the UppP family.

It is found in the cell inner membrane. It carries out the reaction di-trans,octa-cis-undecaprenyl diphosphate + H2O = di-trans,octa-cis-undecaprenyl phosphate + phosphate + H(+). Functionally, catalyzes the dephosphorylation of undecaprenyl diphosphate (UPP). Confers resistance to bacitracin. In Pseudomonas aeruginosa (strain UCBPP-PA14), this protein is Undecaprenyl-diphosphatase.